A 444-amino-acid polypeptide reads, in one-letter code: Cortexillin-1 (444 aa).

The segment at 1 to 227 (MAGKDWEIVQ…VLYTSLFFHA (227 aa)) is actin-binding. 2 Calponin-homology (CH) domains span residues 8–115 (IVQE…RKYR) and 124–229 (KSSE…HAYR). 2 coiled-coil regions span residues 227-352 (AYRA…TRIR) and 410-434 (LATK…DLKA).

The protein belongs to the cortexillin family. As to quaternary structure, homodimer; parallel.

It is found in the cytoplasm. It localises to the cytoskeleton. Its function is as follows. Actin-bundling protein. When linked to F-actin the actin filaments form preferentially anti-parallel bundles that associate into meshworks. Plays a major role in cytokinesis. Negatively regulates cortical localization of rapgap1. In Dictyostelium discoideum (Social amoeba), this protein is Cortexillin-1 (ctxA).